We begin with the raw amino-acid sequence, 112 residues long: Peptidyl-prolyl cis-trans isomerase FKBP12 (112 aa).

Residues M1–C26 form a disordered region. Residues G19–Q112 form the PPIase FKBP-type domain. Cysteines 26 and 80 form a disulfide.

It belongs to the FKBP-type PPIase family. Interacts with FIP37 and with the immunosuppressive drug FK506. Its interaction with FIP37 is inhibited by FK506. Interacts with TOR in a rapamycin-dependent manner.

The protein resides in the cytoplasm. The catalysed reaction is [protein]-peptidylproline (omega=180) = [protein]-peptidylproline (omega=0). In terms of biological role, PPIases accelerate the folding of proteins. It catalyzes the cis-trans isomerization of proline imidic peptide bonds in oligopeptides. Mediates rapamycin inactivation of TOR protein kinase activity. This chain is Peptidyl-prolyl cis-trans isomerase FKBP12 (FKBP12), found in Arabidopsis thaliana (Mouse-ear cress).